Consider the following 367-residue polypeptide: Pre-small/secreted glycoprotein (367 aa).

Residues 1 to 33 form the signal peptide; sequence MGSGYQLLQLPRERFRKTSFLVWVIILFQRAIS. A glycan (N-linked (GlcNAc...) asparagine; by host) is linked at Asn41. 2 cysteine pairs are disulfide-bonded: Cys109/Cys136 and Cys122/Cys148. Asn205, Asn229, Asn239, Asn258, and Asn269 each carry an N-linked (GlcNAc...) asparagine; by host glycan.

This sequence belongs to the filoviruses glycoprotein family. As to quaternary structure, homodimer; disulfide-linked. The homodimers are linked by two disulfide bonds in a parallel orientation. In terms of assembly, monomer. Post-translationally, this precursor is processed into mature sGP and delta-peptide by host furin or furin-like proteases. The cleavage site corresponds to the furin optimal cleavage sequence [KR]-X-[KR]-R. N-glycosylated. In terms of processing, O-glycosylated.

The protein localises to the secreted. Functionally, seems to possess an anti-inflammatory activity as it can reverse the barrier-decreasing effects of TNF alpha. Might therefore contribute to the lack of inflammatory reaction seen during infection in spite the of extensive necrosis and massive virus production. Does not seem to be involved in activation of primary macrophages. Does not seem to interact specifically with neutrophils. Viroporin that permeabilizes mammalian cell plasma membranes. It acts by altering permeation of ionic compounds and small molecules. This activity may lead to viral enterotoxic activity. The chain is Pre-small/secreted glycoprotein (GP) from Epomops franqueti (Franquet's epauletted fruit bat).